Here is a 196-residue protein sequence, read N- to C-terminus: Superoxide dismutase [Fe] (196 aa).

Fe cation-binding residues include H20, H68, D157, and H161.

Belongs to the iron/manganese superoxide dismutase family. In terms of assembly, homotetramer. Requires Fe cation as cofactor.

It catalyses the reaction 2 superoxide + 2 H(+) = H2O2 + O2. Destroys superoxide anion radicals which are normally produced within the cells and which are toxic to biological systems. The sequence is that of Superoxide dismutase [Fe] from Tetrahymena pyriformis.